The following is a 372-amino-acid chain: Glutamate 5-kinase (372 aa).

Lysine 6 contributes to the ATP binding site. Substrate is bound by residues serine 46, aspartate 133, and asparagine 145. Residues 165 to 166 (TD) and 207 to 213 (TGGMYTK) each bind ATP. Positions 272 to 350 (SGRLFIDEGA…HEIEKILGYK (79 aa)) constitute a PUA domain.

Belongs to the glutamate 5-kinase family.

The protein localises to the cytoplasm. It carries out the reaction L-glutamate + ATP = L-glutamyl 5-phosphate + ADP. It participates in amino-acid biosynthesis; L-proline biosynthesis; L-glutamate 5-semialdehyde from L-glutamate: step 1/2. Catalyzes the transfer of a phosphate group to glutamate to form L-glutamate 5-phosphate. The sequence is that of Glutamate 5-kinase from Thermoanaerobacter pseudethanolicus (strain ATCC 33223 / 39E) (Clostridium thermohydrosulfuricum).